We begin with the raw amino-acid sequence, 388 residues long: Purple acid phosphatase 19 (388 aa).

An N-terminal signal peptide occupies residues 1 to 24 (MGLNHLTLVCSAIALLSIFVVSQA). 2 N-linked (GlcNAc...) asparagine glycosylation sites follow: asparagine 97 and asparagine 111. 2 residues coordinate Fe cation: aspartate 145 and tyrosine 148. Residue aspartate 145 participates in Zn(2+) binding. Zn(2+) is bound at residue asparagine 182. Asparagine 182 lines the substrate pocket. A glycan (N-linked (GlcNAc...) asparagine) is linked at asparagine 226. Residue histidine 238 coordinates Zn(2+). The active-site Proton donor is histidine 248. Position 275 (histidine 275) interacts with Zn(2+). 275-277 (HVH) provides a ligand contact to substrate. A Fe cation-binding site is contributed by histidine 277. Asparagine 291 and asparagine 348 each carry an N-linked (GlcNAc...) asparagine glycan.

This sequence belongs to the metallophosphoesterase superfamily. Purple acid phosphatase family. In terms of assembly, homodimer. Requires Fe cation as cofactor. The cofactor is Zn(2+). As to expression, specifically expressed in flowers.

The protein resides in the secreted. It carries out the reaction a phosphate monoester + H2O = an alcohol + phosphate. The chain is Purple acid phosphatase 19 (PAP19) from Arabidopsis thaliana (Mouse-ear cress).